The sequence spans 336 residues: MCGRTACSLGAARLRRACAYRDRQGRRQQPEWLREGRYRPSYNKGPQSSGPVLLSRKHVQQDADSSERVLMDMRWGLVPSWFKEDDPSKMQFKTSNCRSDTMLSKSSYKGPLLKGKRCVVLADGFYEWQQRGGGKQPYFIYFPQNKKHPAEEEEDSDEEWRGWRLLTMAGIFDCWEPPKGGEPLYTYTIITVDASEDVSFIHHRMPAILDGDEAIEKWLDFAEVPTREAMKLIRPAENIAFHPVSTFVNSVRNDTPECLVPIELGVPKEVKATASSKAMLGWLKSSQEGSPQKKEDTLPRWKSQFIHSPSPKKSSAGILRQWLGQEGGPPAKKQKA.

Residue Cys-2 is the Nucleophile of the active site. At Cys-2 the chain carries Thiazolidine linkage to a ring-opened DNA abasic site. Residues 29–38 (QPEWLREGRY) are compositionally biased toward basic and acidic residues. The tract at residues 29–52 (QPEWLREGRYRPSYNKGPQSSGPV) is disordered. The active site involves Glu-127. The interval 283-336 (LKSSQEGSPQKKEDTLPRWKSQFIHSPSPKKSSAGILRQWLGQEGGPPAKKQKA) is disordered.

Belongs to the SOS response-associated peptidase family.

The protein localises to the chromosome. Formation and reversal of DNA-protein cross-link depends on DNA context. Catalyzes formation of the thiazolidine linkage in presence of abasic sites in single-stranded DNA. Mediates the reversal of the thiazolidine cross-link in presence of double stranded DNA. Sensor of abasic sites in single-stranded DNA (ssDNA) required to preserve genome integrity by promoting error-free repair of abasic sites. Acts as an enzyme that recognizes and binds abasic sites in ssDNA at replication forks and chemically modifies the lesion by forming a covalent cross-link with DNA: forms a stable thiazolidine linkage between a ring-opened abasic site and the alpha-amino and sulfhydryl substituents of its N-terminal catalytic cysteine residue. The HMCES DNA-protein cross-link is then either reversed or degraded. HMCES is able to catalyze the reversal of its thiazolidine cross-link and cycle between a cross-link and a non-cross-linked state depending on DNA context: mediates self-reversal of the thiazolidine cross-link in double stranded DNA, allowing APEX1 to initiate downstream repair of abasic sites. The HMCES DNA-protein cross-link can also be degraded by the SPRTN metalloprotease following unfolding by the BRIP1/FANCJ helicase. Promotes error-free repair of abasic sites by protecting abasic sites from translesion synthesis (TLS) polymerases and endonucleases that are error-prone and would generate mutations and double-strand breaks. Acts as a protease: mediates autocatalytic processing of its N-terminal methionine in order to expose the catalytic cysteine. The HMCES DNA-protein cross-link is then either reversed or degraded. According to a model, the HMCES DNA-protein cross-link. The polypeptide is Abasic site processing protein HMCES (Gallus gallus (Chicken)).